The chain runs to 504 residues: Cystathionine beta-synthase (504 aa).

Heme contacts are provided by Cys12 and His23. Lys78 is modified (N6-(pyridoxal phosphate)lysine). Pyridoxal 5'-phosphate is bound by residues Asn108, Gly215 to Thr219, and Ser307. 2 CBS domains span residues Leu375–Cys434 and Met442–Ser498.

It belongs to the cysteine synthase/cystathionine beta-synthase family. In terms of assembly, homodimer. Requires pyridoxal 5'-phosphate as cofactor.

It catalyses the reaction L-homocysteine + L-serine = L,L-cystathionine + H2O. It functions in the pathway amino-acid biosynthesis; L-cysteine biosynthesis; L-cysteine from L-homocysteine and L-serine: step 1/2. With respect to regulation, has no response to S-adenosyl-methionine/AdoMet, unlike mammalian orthologs. Binds non-covalently to a heme group that may control the redox sensitivity of the enzyme. Functionally, hydro-lyase catalyzing the first step of the transsulfuration pathway, where the hydroxyl group of L-serine is displaced by L-homocysteine in a beta-replacement reaction to form L-cystathionine, the precursor of L-cysteine. The chain is Cystathionine beta-synthase from Apis mellifera (Honeybee).